Consider the following 133-residue polypeptide: Bacteriohemerythrin (133 aa).

Positions 19, 56, 60, 75, 79, 115, and 120 each coordinate Fe cation.

Belongs to the hemerythrin family. In terms of assembly, monomer.

In terms of biological role, oxygen-binding protein. May be involved in a storage mechanism or for delivery to oxygen-requiring enzymes. The oxygen-binding site contains two iron atoms. The chain is Bacteriohemerythrin from Campylobacter jejuni subsp. jejuni serotype O:6 (strain 81116 / NCTC 11828).